The following is a 285-amino-acid chain: Nucleotide-binding protein in ptsN-ptsO intergenic region (285 aa).

8–15 (GRSGSGKS) contacts ATP. 60 to 63 (DARN) provides a ligand contact to GTP.

Belongs to the RapZ-like family.

Displays ATPase and GTPase activities. The protein is Nucleotide-binding protein in ptsN-ptsO intergenic region of Stutzerimonas stutzeri (Pseudomonas stutzeri).